Consider the following 1353-residue polypeptide: MSSKSQQPPTGLSKSAAKKRAKKAAKQSQNPQPQSAPQTSSQTPASVPPLPPASVPDPLDPAFFNFPGPGSYPIDVQYDDTAYYDQVDVPLNQGDFPGSYSIDYNLSLQNGSQLAGLSAPFNITHDDLISAANELYKRMADPEFGSDDAYWSSLPPHIRQFIRDAVPFTGSISQSTPGTTSSQRTMYQMAQQIVQAASQGMGLGHGMSANLMPGINANARSFPSPQQTIGEEFGFHRHPDTREEEYDDEEEIEEDQGHPAANGDAPKKKNKKKKKKGANAASLSAPVEPPAPLPPLPPPSTLSKIPRAPAPVPQPQLPTHQPQPLSQQPPSLNPLPPPAPASAPTPTPPSSRAAGKQPMGTNPPANPPARSARAAGKAPASAAPPHNAHAGHSHNHPSTAKPAPKGKSPATAPPAKIWTQSSAEDRENIRVFWLGLSEAERRDLLRIEKDAVLKKMKEQHRHSCGCAVCGRKKVNIEMELDQLYEQYYDELRSYAAEQRVAANGLRPPPSGAGPFPGSVEVDASGTVTQYDHRAPELHDHDPDDLDGEESEEYDDDDDYADDDELDDDDIGTDEADVGDEIDEPPPPPPITHRQQPRRPPVKAPPRSEGGDDFLSFGSNLATIKGGILTIADDMLKNDGTKFLEMMEQLAIRRSVREEQNLRDMQEETDEEEEEEDDDESRDEPMTEKERAEEGKRMFQIFAARMFEQRVLQAYRERVAKQREEQLLRELEEEEDSKRAKEEKKAKEAQKKKDKKKAQKQKAEEERLAREAALEEEKRQAKLRKEEAERERMRRQDEERVRREAVKRAAQEEAQRQALERKRRQQEEKEREEEAAKKKREREEKAKKEREARENELKEKERKEREIKAAKEKAEKERIAKETLEKAERDRLAKEAKEKAEKIRQERLEASRMEKVRKEEAARKEREAVEQAKIIAAQQAQRERAAKAEKNTADKAAAERISAARVIPVAATAPVLATLGLKSPSKGSTPQSAPPVPQLSPVKGAARPITNATPGRSMQKTPTAYYPQPVPPVGVASFSRMPLAQSFGPPGLRPAYPTGSPAYSPPRANGSSISPNPPSRGFTDPSPPGFDHNLRTAPIGVGFPPVKPSGRIPSMADDAFSPTAPIGVPVTRSVSSAGEMGSLISGSVTPDDYRPTPPAPIAPPNLGPIGRPSFSDGQTSGPNVLRSTSPPPPDRVLGSAALGADDEIVQPQQRRPTTSWDMPTAAPGSGRWSASPSIWGSGDPTPAPSWGAPGSMPTVAERPGPPPGLSLSPGAGVNVLGQRQPSFGGIGSSFGGVGAVGSVIGGGMGGTAGSGLVQGHVGGGGYSQGLFSPQHQQQQQLQLQLQLQQQQQQQ.

Residues 1–12 (MSSKSQQPPTGL) are compositionally biased toward polar residues. Disordered regions lie at residues 1–66 (MSSK…FFNF), 216–422 (NANA…TQSS), 503–522 (NGLRPPPSGAGPFPGSVEVD), 531–618 (DHRA…SFGS), 652–694 (RRSV…AEEG), 727–882 (LREL…AKET), 979–1119 (GLKS…DDAF), 1140–1276 (GSLI…GAGV), and 1308–1337 (GGTAGSGLVQGHVGGGGYSQGLFSPQHQQQ). Over residues 16 to 25 (AAKKRAKKAA) the composition is skewed to basic residues. The segment covering 26–45 (KQSQNPQPQSAPQTSSQTPA) has biased composition (low complexity). Residues 46–59 (SVPPLPPASVPDPL) are compositionally biased toward pro residues. The segment covering 218–229 (NARSFPSPQQTI) has biased composition (polar residues). Acidic residues predominate over residues 242–254 (REEEYDDEEEIEE). The segment covering 268 to 277 (KKNKKKKKKG) has biased composition (basic residues). Positions 287–300 (VEPPAPLPPLPPPS) are enriched in pro residues. A compositionally biased stretch (low complexity) spans 317–330 (LPTHQPQPLSQQPP). Pro residues predominate over residues 331–349 (SLNPLPPPAPASAPTPTPP). The segment covering 368–388 (PARSARAAGKAPASAAPPHNA) has biased composition (low complexity). Positions 531-541 (DHRAPELHDHD) are enriched in basic and acidic residues. Positions 542-583 (PDDLDGEESEEYDDDDDYADDDELDDDDIGTDEADVGDEIDE) are enriched in acidic residues. Residues 654-665 (SVREEQNLRDMQ) show a composition bias toward basic and acidic residues. The segment covering 666-681 (EETDEEEEEEDDDESR) has biased composition (acidic residues). 3 stretches are compositionally biased toward basic and acidic residues: residues 682–694 (DEPMTEKERAEEG), 727–750 (LRELEEEEDSKRAKEEKKAKEAQK), and 760–882 (QKAE…AKET). Residues 713–944 (AYRERVAKQR…AAQQAQRERA (232 aa)) are a coiled coil. Positions 1009–1021 (TNATPGRSMQKTP) are enriched in polar residues. Positions 1154 to 1165 (PTPPAPIAPPNL) are enriched in pro residues. Composition is skewed to polar residues over residues 1174–1187 (SDGQTSGPNVLRST) and 1209–1220 (QPQQRRPTTSWD).

This sequence belongs to the NST1 family.

The protein resides in the cytoplasm. May act as a negative regulator of salt tolerance. The chain is Stress response protein NST1 (NST1) from Cryptococcus neoformans var. neoformans serotype D (strain B-3501A) (Filobasidiella neoformans).